We begin with the raw amino-acid sequence, 370 residues long: DNA replication and repair protein RecF (370 aa).

30-37 (GENAQGKT) is an ATP binding site.

This sequence belongs to the RecF family.

The protein localises to the cytoplasm. Its function is as follows. The RecF protein is involved in DNA metabolism; it is required for DNA replication and normal SOS inducibility. RecF binds preferentially to single-stranded, linear DNA. It also seems to bind ATP. The polypeptide is DNA replication and repair protein RecF (Staphylococcus carnosus (strain TM300)).